Here is a 211-residue protein sequence, read N- to C-terminus: Bifunctional transcriptional activator/DNA repair enzyme AdaA (211 aa).

Cys54 serves as the catalytic Nucleophile; methyl group acceptor from methylphosphotriester. 4 residues coordinate Zn(2+): Cys54, Cys58, Cys85, and Cys88. In terms of domain architecture, HTH araC/xylS-type spans 102–200 (DLITEYIDKN…GQTPARFRQM (99 aa)). The segment at residues 119-140 (ESLADICHGSPYHMHRTFKKIK) is a DNA-binding region (H-T-H motif).

Zn(2+) serves as cofactor.

The enzyme catalyses (2'-deoxyribonucleoside 5'-methylphosphotriester)-DNA + L-cysteinyl-[protein] = 2'-deoxyribonucleotide-DNA + S-methyl-L-cysteinyl-[protein] + H(+). Is involved in the adaptive response to alkylation damage in DNA caused by alkylating agents. Repairs the methylphosphotriester lesions in DNA by a direct and irreversible transfer of the methyl group to one of its own cysteine residues. In terms of biological role, the methylation of AdaA by methylphosphotriesters in DNA leads to its activation as a transcriptional regulator that activates the transcription of the ada operon which consists of adaA and adaB, and of the adjacent gene alkA. This Bacillus subtilis (strain 168) protein is Bifunctional transcriptional activator/DNA repair enzyme AdaA (adaA).